An 837-amino-acid polypeptide reads, in one-letter code: ABC transporter A family member 8 (837 aa).

A run of 7 helical transmembrane segments spans residues 29 to 49, 244 to 264, 303 to 323, 326 to 346, 356 to 376, 393 to 413, and 455 to 475; these read YFST…FYII, VVSL…FIFL, LIIC…FFLG, FLVL…MAFF, VAIG…LTFN, GAAF…SKVL, and LAYM…IEYA. The ABC transporter domain occupies 516–750; that stretch reads IRGLSKTFNK…YGEGYSVQVI (235 aa). An ATP-binding site is contributed by 553-560; it reads GSNGAGKS.

The protein belongs to the ABC transporter superfamily. ABCA family.

The protein resides in the membrane. This is ABC transporter A family member 8 (abcA8) from Dictyostelium discoideum (Social amoeba).